A 529-amino-acid chain; its full sequence is Tyrosinase (529 aa).

The signal sequence occupies residues 1–18; that stretch reads MLLAVLYCLLWSFQTSAG. Residues 19-476 lie on the Lumenal, melanosome side of the membrane; it reads HFPRACVSSK…YLEQASRIWS (458 aa). 3 N-linked (GlcNAc...) asparagine glycosylation sites follow: asparagine 86, asparagine 111, and asparagine 161. Cu cation is bound by residues histidine 180, histidine 202, and histidine 211. The N-linked (GlcNAc...) asparagine glycan is linked to asparagine 230. Residues 287-313 form a disordered region; that stretch reads SLCNGTPEGPLRRNPGNHDKSRTPRLP. A glycan (N-linked (GlcNAc...) asparagine) is linked at asparagine 337. Histidine 363 and histidine 367 together coordinate Cu cation. N-linked (GlcNAc...) asparagine glycosylation is present at asparagine 371. Residue histidine 390 coordinates Cu cation. A helical membrane pass occupies residues 477–497; that stretch reads WLLGAAMVGAVLTALLAGLVS. Topologically, residues 498–529 are cytoplasmic; that stretch reads LLCRHKRKQLPEEKQPLLMEKEDYHSLYQSHL.

This sequence belongs to the tyrosinase family. In terms of assembly, forms an OPN3-dependent complex with DCT in response to blue light in melanocytes. Cu(2+) is required as a cofactor. In terms of processing, glycosylated.

The protein resides in the melanosome membrane. It localises to the melanosome. It catalyses the reaction 2 L-dopa + O2 = 2 L-dopaquinone + 2 H2O. It carries out the reaction L-tyrosine + O2 = L-dopaquinone + H2O. The enzyme catalyses 2 5,6-dihydroxyindole-2-carboxylate + O2 = 2 indole-5,6-quinone-2-carboxylate + 2 H2O. In terms of biological role, this is a copper-containing oxidase that functions in the formation of pigments such as melanins and other polyphenolic compounds. Catalyzes the initial and rate limiting step in the cascade of reactions leading to melanin production from tyrosine. In addition to hydroxylating tyrosine to DOPA (3,4-dihydroxyphenylalanine), also catalyzes the oxidation of DOPA to DOPA-quinone, and possibly the oxidation of DHI (5,6-dihydroxyindole) to indole-5,6 quinone. The polypeptide is Tyrosinase (Homo sapiens (Human)).